A 307-amino-acid chain; its full sequence is Ribosomal RNA small subunit methyltransferase H (307 aa).

S-adenosyl-L-methionine contacts are provided by residues 33 to 35 (GGY), Asp-51, Phe-82, Asp-96, and Gln-103.

It belongs to the methyltransferase superfamily. RsmH family.

Its subcellular location is the cytoplasm. It catalyses the reaction cytidine(1402) in 16S rRNA + S-adenosyl-L-methionine = N(4)-methylcytidine(1402) in 16S rRNA + S-adenosyl-L-homocysteine + H(+). Specifically methylates the N4 position of cytidine in position 1402 (C1402) of 16S rRNA. This chain is Ribosomal RNA small subunit methyltransferase H, found in Rickettsia peacockii (strain Rustic).